Reading from the N-terminus, the 1229-residue chain is Membrane-anchored lipid-binding protein SIP3 (1229 aa).

At 1-1066 (MSVHGRDPKK…AEKFSRINRM (1066 aa)) the chain is on the cytoplasmic side. One can recognise a PH domain in the interval 309 to 423 (SPEKSGWLYM…WLIAFEATKK (115 aa)). Residues 771–976 (EYSITYNHEY…VLRYYLEKIG (206 aa)) enclose the VASt domain. Residues 1067-1087 (MVVGLLASIMINILLSEKASV) traverse the membrane as a helical segment. At 1088 to 1229 (PYWSIKRAEK…ELEKLRPPIT (142 aa)) the chain is on the lumenal side. A glycan (N-linked (GlcNAc...) asparagine) is linked at asparagine 1206.

Belongs to the SIP3 family. Interacts with SNF1.

It is found in the endoplasmic reticulum membrane. In terms of biological role, may be involved in sterol transfer between intracellular membranes. This chain is Membrane-anchored lipid-binding protein SIP3, found in Saccharomyces cerevisiae (strain ATCC 204508 / S288c) (Baker's yeast).